The following is a 337-amino-acid chain: Phenylalanine--tRNA ligase alpha subunit (337 aa).

Residue glutamate 252 participates in Mg(2+) binding.

This sequence belongs to the class-II aminoacyl-tRNA synthetase family. Phe-tRNA synthetase alpha subunit type 1 subfamily. Tetramer of two alpha and two beta subunits. Mg(2+) serves as cofactor.

It is found in the cytoplasm. The catalysed reaction is tRNA(Phe) + L-phenylalanine + ATP = L-phenylalanyl-tRNA(Phe) + AMP + diphosphate + H(+). This is Phenylalanine--tRNA ligase alpha subunit from Francisella philomiragia subsp. philomiragia (strain ATCC 25017 / CCUG 19701 / FSC 153 / O#319-036).